The following is a 208-amino-acid chain: Small ribosomal subunit protein uS4 (208 aa).

In terms of domain architecture, S4 RNA-binding spans Q98 to I161.

The protein belongs to the universal ribosomal protein uS4 family. In terms of assembly, part of the 30S ribosomal subunit. Contacts protein S5. The interaction surface between S4 and S5 is involved in control of translational fidelity.

Functionally, one of the primary rRNA binding proteins, it binds directly to 16S rRNA where it nucleates assembly of the body of the 30S subunit. Its function is as follows. With S5 and S12 plays an important role in translational accuracy. This chain is Small ribosomal subunit protein uS4, found in Sulfurovum sp. (strain NBC37-1).